Reading from the N-terminus, the 205-residue chain is Small ribosomal subunit protein uS4B (205 aa).

In terms of domain architecture, S4 RNA-binding spans 94–157 (RRLDNVVFRA…LNLPIVLGTL (64 aa)).

The protein belongs to the universal ribosomal protein uS4 family. In terms of assembly, part of the 30S ribosomal subunit. Contacts protein S5. The interaction surface between S4 and S5 is involved in control of translational fidelity.

One of the primary rRNA binding proteins, it binds directly to 16S rRNA where it nucleates assembly of the body of the 30S subunit. Functionally, with S5 and S12 plays an important role in translational accuracy. The polypeptide is Small ribosomal subunit protein uS4B (Nitrosomonas europaea (strain ATCC 19718 / CIP 103999 / KCTC 2705 / NBRC 14298)).